A 113-amino-acid polypeptide reads, in one-letter code: UPF0212 protein MmarC6_1165 (113 aa).

It belongs to the UPF0212 family.

This is UPF0212 protein MmarC6_1165 from Methanococcus maripaludis (strain C6 / ATCC BAA-1332).